The primary structure comprises 570 residues: Adenine deaminase (570 aa).

It belongs to the metallo-dependent hydrolases superfamily. Adenine deaminase family. Requires Mn(2+) as cofactor.

It catalyses the reaction adenine + H2O + H(+) = hypoxanthine + NH4(+). The protein is Adenine deaminase of Oleidesulfovibrio alaskensis (strain ATCC BAA-1058 / DSM 17464 / G20) (Desulfovibrio alaskensis).